A 109-amino-acid polypeptide reads, in one-letter code: Large ribosomal subunit protein P1C (109 aa).

Positions 68-83 (ASAPTAAGAGAAAPAE) are enriched in low complexity. Residues 68–109 (ASAPTAAGAGAAAPAEAAEEEKKEEAKEEEESDEDMGFGLFD) are disordered. The segment covering 94–103 (KEEEESDEDM) has biased composition (acidic residues). Ser-99 is modified (phosphoserine).

The protein belongs to the eukaryotic ribosomal protein P1/P2 family. Component of the large ribosomal subunit (LSU). Mature yeast ribosomes consist of a small (40S) and a large (60S) subunit. The 40S small subunit contains 1 molecule of ribosomal RNA (18S rRNA) and at least 33 different proteins. The large 60S subunit contains 3 rRNA molecules (25S, 5.8S and 5S rRNA) and at least 46 different proteins. The acidic ribosomal P-proteins form the stalk structure of the 60S subunit. They are organized as a pentameric complex in which uL10/P0 interacts with 2 heterodimers of P1 and P2 proteins.

It is found in the cytoplasm. Component of the ribosome, a large ribonucleoprotein complex responsible for the synthesis of proteins in the cell. The small ribosomal subunit (SSU) binds messenger RNAs (mRNAs) and translates the encoded message by selecting cognate aminoacyl-transfer RNA (tRNA) molecules. The large subunit (LSU) contains the ribosomal catalytic site termed the peptidyl transferase center (PTC), which catalyzes the formation of peptide bonds, thereby polymerizing the amino acids delivered by tRNAs into a polypeptide chain. The nascent polypeptides leave the ribosome through a tunnel in the LSU and interact with protein factors that function in enzymatic processing, targeting, and the membrane insertion of nascent chains at the exit of the ribosomal tunnel. This is Large ribosomal subunit protein P1C (rpp103) from Schizosaccharomyces pombe (strain 972 / ATCC 24843) (Fission yeast).